We begin with the raw amino-acid sequence, 955 residues long: MMATSQDYFGNPYALFRGPPTTLRPRESPLGVGHPHGHGHLHSHAHAHGHGHAHSHYAALDLQTPHKRNIETDVRAPPPPLPPPPLPLPPASPRYNTDQGAMDQQFCLRWNNHPTNLTGVLTSLLQREALCDVTLACEGETVKAHQTILSACSPYFETIFLQNQHPHPIIYLKDVRYSEMRSLLDFMYKGEVNVGQSSLPMFLKTAESLQVRGLTDNNNLNYRSDCDKLRDSAASSPTGRGPSNYTGGLGGAGGVADAMRESRDSLRSRCERDLRDELTQRSSSSMSERSSAAAAAAAAAAAVAAAGGNVNAAAVALGLTTPTGGERSPSVGSASAAAAAAAVAAAVAAAANRSASADGCSDRGSERGTLERTDSRDDLLQLDYSNKDNNNSNSSSTGGNNNNNNNNNNNSSSNNNNSSSNRERNNSGERERERERERERDRDRELSTTPVEQLSSSKRRRKNSSSNCDNSLSSSHQDRHYPQDSQANFKSSPVPKTGGSTSESEDAGGRHDSPLSMTTSVHLGGGGGNVGAASALSGLSQSLSIKQELMDAQQQQQHREHHVALPPDYLPSAALKLHAEDMSTLLTQHALQAADARDEHNDAKQLQLDQTDNIDGRVKCFNIKHDRHPDRELDRNHREHDDDPGVIEEVVVDHVREMEAGNEHDPEEMKEAAYHATPPKYRRAVVYAPPHPDEEAASGSGSDIYVDGGYNCEYKCKELNMRAIRCSRQQHMMSHYSPHHPHHRSLIDCPAEAAYSPPVANNQAYLASNGAVQQLDLSTYHGHANHQLHQHPPSATHPSHSQSSPHYPSASGAGAGAGSVSVSIAGSASGSATSAPASVATSAVSPQPSSSSTGSTSSAAAVAAAAAAAANRRDHNIDYSTLFVQLSGTLPTLYRCVSCNKIVSNRWHHANIHRPQSHECPVCGQKFTRRDNMKAHCKIKHADIKDRFFSHYVHM.

Disordered stretches follow at residues 1–55 (MMAT…HAHS) and 70–89 (IETD…LPLP). Residues 35-55 (PHGHGHLHSHAHAHGHGHAHS) are compositionally biased toward basic residues. Pro residues predominate over residues 76–89 (APPPPLPPPPLPLP). One can recognise a BTB domain in the interval 131–196 (CDVTLACEGE…MYKGEVNVGQ (66 aa)). 3 disordered regions span residues 229–288 (LRDS…SMSE), 352–526 (NRSA…LGGG), and 784–814 (ANHQ…SGAG). A compositionally biased stretch (polar residues) spans 233-246 (AASSPTGRGPSNYT). Composition is skewed to basic and acidic residues over residues 258 to 279 (AMRE…DELT) and 360 to 379 (CSDR…RDDL). Positions 387-420 (KDNNNSNSSSTGGNNNNNNNNNNNSSSNNNNSSS) are enriched in low complexity. Residues 421-446 (NRERNNSGERERERERERERDRDREL) are compositionally biased toward basic and acidic residues. Low complexity-rich tracts occupy residues 464-475 (SSSNCDNSLSSS) and 790-814 (QHPP…SGAG). The C2H2-type zinc finger occupies 918-941 (HECPVCGQKFTRRDNMKAHCKIKH).

As to expression, expressed in parts of the adult male brain associated with the courtship song and steps of the male courtship. Also expressed in the larval and pupal male mushroom body and optic lobe. Expressed in pupal female optic lobe.

Its subcellular location is the nucleus. Probably acts as a transcriptional regulator. Part of the somatic sex determination hierarchy; sex determination genes transformer (tra) and transformer-2 (tra-2) switch fru splicing from the male-specific pattern to the female-specific pattern through activation of the female-specific fru 5'-splice site. Vital for the development of males and females. Controls the development of the male specific abdominal muscle of Lawrence. Plays a role in male courtship behavior and sexual orientation. Enhances male-specific expression of takeout in brain-associated fat body. The sequence is that of Sex determination protein fruitless (fru) from Drosophila melanogaster (Fruit fly).